A 56-amino-acid polypeptide reads, in one-letter code: Large ribosomal subunit protein bL33 (56 aa).

It belongs to the bacterial ribosomal protein bL33 family.

The chain is Large ribosomal subunit protein bL33 from Actinobacillus succinogenes (strain ATCC 55618 / DSM 22257 / CCUG 43843 / 130Z).